The chain runs to 440 residues: Tyrosine--tRNA ligase (440 aa).

Position 46 (Tyr-46) interacts with L-tyrosine. Positions 51 to 60 (PTAASLHIGN) match the 'HIGH' region motif. The L-tyrosine site is built by Tyr-181 and Gln-185. A 'KMSKS' region motif is present at residues 241–245 (KFGKS). Lys-244 lines the ATP pocket. The S4 RNA-binding domain maps to 373-439 (DRVIDAAQAA…GKKALGAVEN (67 aa)).

It belongs to the class-I aminoacyl-tRNA synthetase family. TyrS type 1 subfamily. In terms of assembly, homodimer.

It localises to the cytoplasm. It carries out the reaction tRNA(Tyr) + L-tyrosine + ATP = L-tyrosyl-tRNA(Tyr) + AMP + diphosphate + H(+). Catalyzes the attachment of tyrosine to tRNA(Tyr) in a two-step reaction: tyrosine is first activated by ATP to form Tyr-AMP and then transferred to the acceptor end of tRNA(Tyr). The polypeptide is Tyrosine--tRNA ligase (Bifidobacterium longum subsp. infantis (strain ATCC 15697 / DSM 20088 / JCM 1222 / NCTC 11817 / S12)).